The following is a 448-amino-acid chain: Putative vacuolar cation/proton exchanger 6 (448 aa).

The Cytoplasmic segment spans residues 31–81; that stretch reads MGLVNEVELKSLLEQETDSPQTNAASLMEQGSLRERRAKAPRNSVVQSFKI. A helical transmembrane segment spans residues 82–102; it reads VILSNKLNLLLPFGPLAILVH. Over 103 to 109 the chain is Extracellular; that stretch reads YLTDNKG. The chain crosses the membrane as a helical span at residues 110-130; that stretch reads WFFLLSLVGITPLAERLGYAT. Topologically, residues 131-141 are cytoplasmic; that stretch reads EQLSCYTGATV. Residues 142-162 traverse the membrane as a helical segment; the sequence is GGLLNATFGNVIELIISIIAL. Residues 150-185 form a cation selection region; the sequence is GNVIELIISIIALKNGMIRVVQLTLLGSILSNILLV. Topologically, residues 163–178 are extracellular; the sequence is KNGMIRVVQLTLLGSI. A helical transmembrane segment spans residues 179–199; sequence LSNILLVLGCAFFCGGLVFPG. Residues 200–209 are Cytoplasmic-facing; sequence KDQVFDKRNA. The helical transmembrane segment at 210–230 threads the bilayer; that stretch reads VVSSGMLLMAVMGLLFPTFLH. The Extracellular segment spans residues 231-243; it reads YTHSEVHAGSSEL. A helical transmembrane segment spans residues 244–264; it reads ALSRFISCIMLVAYAAYLFFQ. The Cytoplasmic portion of the chain corresponds to 265-295; the sequence is LKSQPSFYTEKTNQNEETSNDDEDPEISKWE. The chain crosses the membrane as a helical span at residues 296 to 316; that stretch reads AIIWLSIFTAWVSLLSGYLVD. Over 317 to 334 the chain is Extracellular; sequence AIEGTSVSWKIPISFISV. A helical transmembrane segment spans residues 335-355; it reads ILLPIVGNAAEHAGAIMFAMK. The tract at residues 341–376 is cation selection; it reads GNAAEHAGAIMFAMKDKLDLSLGVAIGSSIQISMFA. Residues 356–363 are Cytoplasmic-facing; that stretch reads DKLDLSLG. A helical membrane pass occupies residues 364 to 384; sequence VAIGSSIQISMFAVPFCVVIG. The Extracellular portion of the chain corresponds to 385–393; the sequence is WMMGAQMDL. Residues 394–414 form a helical membrane-spanning segment; sequence NLQLFETATLLITVIVVAFFL. The Cytoplasmic segment spans residues 415 to 425; sequence QLEGTSNYFKR. The helical transmembrane segment at 426–446 threads the bilayer; it reads LMLILCYLIVAASFFVHEDPH. The Extracellular segment spans residues 447 to 448; the sequence is QG.

It belongs to the Ca(2+):cation antiporter (CaCA) (TC 2.A.19) family. Cation/proton exchanger (CAX) subfamily.

The protein localises to the vacuole membrane. Its function is as follows. Vacuolar cation/proton exchanger (CAX). Translocates Ca(2+) and other metal ions into vacuoles using the proton gradient formed by H(+)-ATPase and H(+)-pyrophosphatase. This Arabidopsis thaliana (Mouse-ear cress) protein is Putative vacuolar cation/proton exchanger 6 (CAX6).